The chain runs to 587 residues: 5-aminolevulinate synthase, erythroid-specific, mitochondrial (587 aa).

Residues 1–49 (MVAAAMLLRSCPVLSKGPTGLLGKVAKTYQFLFGIGRCPILATQGPTCS) constitute a mitochondrion transit peptide. Succinyl-CoA is bound at residue arginine 163. Positions 258 and 259 each coordinate pyridoxal 5'-phosphate. The succinyl-CoA site is built by serine 280 and lysine 299. Pyridoxal 5'-phosphate is bound by residues serine 332, histidine 360, and threonine 388. Residue lysine 391 is part of the active site. An N6-(pyridoxal phosphate)lysine modification is found at lysine 391. Residues threonine 420 and threonine 421 each coordinate pyridoxal 5'-phosphate. Succinyl-CoA is bound at residue threonine 508.

This sequence belongs to the class-II pyridoxal-phosphate-dependent aminotransferase family. Homodimer. Interacts with SUCLA2. The cofactor is pyridoxal 5'-phosphate. As to expression, erythroid-specific.

Its subcellular location is the mitochondrion inner membrane. The enzyme catalyses succinyl-CoA + glycine + H(+) = 5-aminolevulinate + CO2 + CoA. It participates in porphyrin-containing compound metabolism; protoporphyrin-IX biosynthesis; 5-aminolevulinate from glycine: step 1/1. In terms of biological role, catalyzes the pyridoxal 5'-phosphate (PLP)-dependent condensation of succinyl-CoA and glycine to form aminolevulinic acid (ALA), with CoA and CO2 as by-products. Contributes significantly to heme formation during erythropoiesis. In Rattus norvegicus (Rat), this protein is 5-aminolevulinate synthase, erythroid-specific, mitochondrial (Alas2).